An 85-amino-acid chain; its full sequence is Large ribosomal subunit protein eL34 (85 aa).

The protein belongs to the eukaryotic ribosomal protein eL34 family.

In Saccharolobus islandicus (strain M.16.27) (Sulfolobus islandicus), this protein is Large ribosomal subunit protein eL34.